The following is a 378-amino-acid chain: Putative glutamate--cysteine ligase 2 (378 aa).

The protein belongs to the glutamate--cysteine ligase type 2 family. YbdK subfamily.

It carries out the reaction L-cysteine + L-glutamate + ATP = gamma-L-glutamyl-L-cysteine + ADP + phosphate + H(+). ATP-dependent carboxylate-amine ligase which exhibits weak glutamate--cysteine ligase activity. This is Putative glutamate--cysteine ligase 2 from Salinispora tropica (strain ATCC BAA-916 / DSM 44818 / JCM 13857 / NBRC 105044 / CNB-440).